We begin with the raw amino-acid sequence, 244 residues long: Ribonuclease PH (244 aa).

Residues Arg-86 and 124-126 (GTR) each bind phosphate.

Belongs to the RNase PH family. Homohexameric ring arranged as a trimer of dimers.

It catalyses the reaction tRNA(n+1) + phosphate = tRNA(n) + a ribonucleoside 5'-diphosphate. Functionally, phosphorolytic 3'-5' exoribonuclease that plays an important role in tRNA 3'-end maturation. Removes nucleotide residues following the 3'-CCA terminus of tRNAs; can also add nucleotides to the ends of RNA molecules by using nucleoside diphosphates as substrates, but this may not be physiologically important. Probably plays a role in initiation of 16S rRNA degradation (leading to ribosome degradation) during starvation. The protein is Ribonuclease PH of Oceanobacillus iheyensis (strain DSM 14371 / CIP 107618 / JCM 11309 / KCTC 3954 / HTE831).